A 256-amino-acid chain; its full sequence is Thiazole synthase (256 aa).

The active-site Schiff-base intermediate with DXP is the K95. 1-deoxy-D-xylulose 5-phosphate-binding positions include G156, 182–183 (AG), and 204–205 (NT).

This sequence belongs to the ThiG family. Homotetramer. Forms heterodimers with either ThiH or ThiS.

It localises to the cytoplasm. The enzyme catalyses [ThiS sulfur-carrier protein]-C-terminal-Gly-aminoethanethioate + 2-iminoacetate + 1-deoxy-D-xylulose 5-phosphate = [ThiS sulfur-carrier protein]-C-terminal Gly-Gly + 2-[(2R,5Z)-2-carboxy-4-methylthiazol-5(2H)-ylidene]ethyl phosphate + 2 H2O + H(+). It participates in cofactor biosynthesis; thiamine diphosphate biosynthesis. In terms of biological role, catalyzes the rearrangement of 1-deoxy-D-xylulose 5-phosphate (DXP) to produce the thiazole phosphate moiety of thiamine. Sulfur is provided by the thiocarboxylate moiety of the carrier protein ThiS. In vitro, sulfur can be provided by H(2)S. The protein is Thiazole synthase of Salmonella paratyphi B (strain ATCC BAA-1250 / SPB7).